The sequence spans 312 residues: Src-like-adapter (312 aa).

A disordered region spans residues 1 to 33 (MLCRLPGPSTSRGEKEMGNSMKSTPAPLERPLS). The SH3 domain occupies 38–98 (LESDFLAVLN…PGICVARVYH (61 aa)). Residues 100-191 (WLFEGLGRDK…GLCCVLTTPC (92 aa)) enclose the SH2 domain. Positions 206 to 312 (CTSPGSPVTL…TQKTKALTAT (107 aa)) are SLA C-terminal. Residue S274 is modified to Phosphoserine.

As to quaternary structure, homodimer. Interacts with phosphorylated CBL, SYK and LAT. Homodimerization and interaction with phosphorylated CBL occurs via its C-terminal domain. Interacts with PDGFRB and EPHA2. Interacts with phosphorylated proteins ZAP70; CD3Z; VAV1 and LCP2 via its SH2 domain. Post-translationally, phosphorylated.

The protein resides in the cytoplasm. It is found in the endosome. Functionally, adapter protein, which negatively regulates T-cell receptor (TCR) signaling. Inhibits T-cell antigen-receptor induced activation of nuclear factor of activated T-cells. Involved in the negative regulation of positive selection and mitosis of T-cells. May act by linking signaling proteins such as ZAP70 with CBL, leading to a CBL dependent degradation of signaling proteins. The chain is Src-like-adapter (Sla) from Rattus norvegicus (Rat).